Reading from the N-terminus, the 332-residue chain is Beta-ketoacyl-[acyl-carrier-protein] synthase III (332 aa).

Active-site residues include C116 and H255. The interval 256 to 260 (QANLR) is ACP-binding. N285 is a catalytic residue.

This sequence belongs to the thiolase-like superfamily. FabH family. In terms of assembly, homodimer.

It localises to the cytoplasm. It carries out the reaction malonyl-[ACP] + acetyl-CoA + H(+) = 3-oxobutanoyl-[ACP] + CO2 + CoA. It participates in lipid metabolism; fatty acid biosynthesis. Its function is as follows. Catalyzes the condensation reaction of fatty acid synthesis by the addition to an acyl acceptor of two carbons from malonyl-ACP. Catalyzes the first condensation reaction which initiates fatty acid synthesis and may therefore play a role in governing the total rate of fatty acid production. Possesses both acetoacetyl-ACP synthase and acetyl transacylase activities. Its substrate specificity determines the biosynthesis of branched-chain and/or straight-chain of fatty acids. This Helicobacter hepaticus (strain ATCC 51449 / 3B1) protein is Beta-ketoacyl-[acyl-carrier-protein] synthase III.